The primary structure comprises 90 residues: Small ribosomal subunit protein uS15c (90 aa).

The protein belongs to the universal ribosomal protein uS15 family. In terms of assembly, part of the 30S ribosomal subunit.

The protein localises to the plastid. The protein resides in the chloroplast. This Secale cereale (Rye) protein is Small ribosomal subunit protein uS15c (rps15).